A 572-amino-acid polypeptide reads, in one-letter code: Urease subunit alpha (572 aa).

The Urease domain maps to 134–572; it reads GGIDAHVHMI…VSLGQLYFFS (439 aa). Residues His139, His141, and Lys222 each coordinate Ni(2+). N6-carboxylysine is present on Lys222. His224 is a substrate binding site. Residues His251 and His277 each contribute to the Ni(2+) site. Catalysis depends on His325, which acts as the Proton donor. Residue Asp365 participates in Ni(2+) binding.

Belongs to the metallo-dependent hydrolases superfamily. Urease alpha subunit family. As to quaternary structure, heterotrimer of UreA (gamma), UreB (beta) and UreC (alpha) subunits. Three heterotrimers associate to form the active enzyme. Ni cation serves as cofactor. Carboxylation allows a single lysine to coordinate two nickel ions.

Its subcellular location is the cytoplasm. The enzyme catalyses urea + 2 H2O + H(+) = hydrogencarbonate + 2 NH4(+). It participates in nitrogen metabolism; urea degradation; CO(2) and NH(3) from urea (urease route): step 1/1. The polypeptide is Urease subunit alpha (Laribacter hongkongensis (strain HLHK9)).